The sequence spans 143 residues: Protein RJ1 (143 aa).

Positions Met-1–Ala-26 are cleaved as a signal peptide.

This chain is Protein RJ1 (RJ1), found in Human herpesvirus 6A (strain Uganda-1102) (HHV-6 variant A).